The following is a 602-amino-acid chain: GTP-binding protein 2 (602 aa).

A disordered region spans residues 18–64 (GPAMGGNLKARGAGGSSSCGGPKGKKKNGRNRGGKANNPPYLPPEAE). Residues 29–39 (GAGGSSSCGGP) show a composition bias toward gly residues. Residues 40-50 (KGKKKNGRNRG) show a composition bias toward basic residues. One can recognise a tr-type G domain in the interval 170–398 (FLDLRVAVLG…LNILPPLTNS (229 aa)). Residues 179–186 (GNVDSGKS), 260–264 (DLAGH), and 316–319 (SKVD) contribute to the GTP site.

This sequence belongs to the TRAFAC class translation factor GTPase superfamily. Classic translation factor GTPase family. GTPBP1 subfamily. Predominantly expressed in thymus, spleen, and testis. Expressed at lower levels in brain, heart, lung, kidney, and skeletal muscle. In testis, specifically expressed in spermatocytes and round spermatids.

The sequence is that of GTP-binding protein 2 from Mus musculus (Mouse).